The chain runs to 155 residues: Transcriptional repressor NrdR (155 aa).

The segment at 3–34 (CPYCGHLEDRVVDSRETQDGQATRRRRACLSC) is a zinc-finger region. Positions 49 to 139 (PQVVKKDGRR…VYRAFRDVGE (91 aa)) constitute an ATP-cone domain.

Belongs to the NrdR family. The cofactor is Zn(2+).

Functionally, negatively regulates transcription of bacterial ribonucleotide reductase nrd genes and operons by binding to NrdR-boxes. The protein is Transcriptional repressor NrdR of Anaeromyxobacter sp. (strain K).